A 216-amino-acid chain; its full sequence is Ras-like protein rasW (216 aa).

Position 16-23 (16-23) interacts with GTP; it reads GDGGVGKT. Residues 38 to 46 carry the Effector region motif; it reads YDPTIEDSY. Residues 63–67 and 122–125 each bind GTP; these read DTAGQ and NKID. The segment at 171-193 is disordered; sequence KRKEDPQSHKPSKDSDSKKPLVN. Positions 172–189 are enriched in basic and acidic residues; sequence RKEDPQSHKPSKDSDSKK. Cys-213 bears the Cysteine methyl ester mark. Cys-213 carries the S-geranylgeranyl cysteine lipid modification. A propeptide spans 214 to 216 (removed in mature form); it reads KMM.

This sequence belongs to the small GTPase superfamily. Ras family.

It is found in the cell membrane. It catalyses the reaction GTP + H2O = GDP + phosphate + H(+). In terms of biological role, ras proteins bind GDP/GTP and possess intrinsic GTPase activity. This is Ras-like protein rasW (rasW) from Dictyostelium discoideum (Social amoeba).